The primary structure comprises 178 residues: ATP-dependent protease subunit HslV (178 aa).

Thr5 is a catalytic residue. Na(+) is bound by residues Gly161, Cys164, and Thr167.

It belongs to the peptidase T1B family. HslV subfamily. A double ring-shaped homohexamer of HslV is capped on each side by a ring-shaped HslU homohexamer. The assembly of the HslU/HslV complex is dependent on binding of ATP.

The protein resides in the cytoplasm. The catalysed reaction is ATP-dependent cleavage of peptide bonds with broad specificity.. Allosterically activated by HslU binding. Its function is as follows. Protease subunit of a proteasome-like degradation complex believed to be a general protein degrading machinery. The chain is ATP-dependent protease subunit HslV from Aliarcobacter butzleri (strain RM4018) (Arcobacter butzleri).